Here is a 386-residue protein sequence, read N- to C-terminus: Methionine import ATP-binding protein MetN 2 (386 aa).

One can recognise an ABC transporter domain in the interval 32-272 (VIFDDVGKVF…PQHDATRALL (241 aa)). 69 to 76 (GRSGAGKS) is a binding site for ATP.

This sequence belongs to the ABC transporter superfamily. Methionine importer (TC 3.A.1.24) family. As to quaternary structure, the complex is composed of two ATP-binding proteins (MetN), two transmembrane proteins (MetI) and a solute-binding protein (MetQ).

The protein localises to the cell inner membrane. The enzyme catalyses L-methionine(out) + ATP + H2O = L-methionine(in) + ADP + phosphate + H(+). The catalysed reaction is D-methionine(out) + ATP + H2O = D-methionine(in) + ADP + phosphate + H(+). Functionally, part of the ABC transporter complex MetNIQ involved in methionine import. Responsible for energy coupling to the transport system. The chain is Methionine import ATP-binding protein MetN 2 from Paraburkholderia xenovorans (strain LB400).